The following is a 245-amino-acid chain: uncharacterized protein (245 aa).

Positions 1–19 (MKLTQFISYAILSLSGVQA) are cleaved as a signal peptide.

It localises to the secreted. This is an uncharacterized protein from Arthroderma benhamiae (strain ATCC MYA-4681 / CBS 112371) (Trichophyton mentagrophytes).